The sequence spans 94 residues: Small ribosomal subunit protein uS17 (94 aa).

It belongs to the universal ribosomal protein uS17 family. Part of the 30S ribosomal subunit.

In terms of biological role, one of the primary rRNA binding proteins, it binds specifically to the 5'-end of 16S ribosomal RNA. The sequence is that of Small ribosomal subunit protein uS17 from Streptomyces griseus subsp. griseus (strain JCM 4626 / CBS 651.72 / NBRC 13350 / KCC S-0626 / ISP 5235).